Reading from the N-terminus, the 212-residue chain is uncharacterized protein (212 aa).

S-adenosyl-L-methionine is bound by residues glycine 53, glutamate 74, and aspartate 97.

This sequence belongs to the methyltransferase superfamily. YrrT family.

Functionally, could be a S-adenosyl-L-methionine-dependent methyltransferase. This is an uncharacterized protein from Bacillus cereus (strain ZK / E33L).